Here is a 439-residue protein sequence, read N- to C-terminus: MTVTTRFAPSPTGHLHVGNVRTALHNWLWARKHGGRFLLRIDDTDVERSKEDYVAGIRADLAWLGLDIDAEERQSARFALYEAEFEKLKAAGRVYACYETPDELEVRRKILLSRGLPPVYERKPADAPVPEGVAPHWRFRLDHDAPIEWTDLIRGPQHFEPTTMSDPVVRRADGSWLYLLPSVIDDIAMGISHVVRGEDHVSNTAAQVQMFAALGASPPAFAHEALLVGTEGKLSKRLGSLGMASLREQGIEPIALAALLARLGTSDPVEPVTDLAPLVASIDFARFGRAPARFDEAELALLNQKILHHIDHAAVADRLPAAIDEARWKAIRPNLTTVAEAADWLPVFDGPFVPTATEAADRPVLRAAAKAALDIDWSADPWHALTAAVKEATGAKGRALFLPLRRALTGRDHGPDMAELLPLIAKEAAIARLTSAGGS.

Positions 9–19 (PSPTGHLHVGN) match the 'HIGH' region motif. The 'KMSKS' region signature appears at 233–237 (KLSKR). Position 236 (K236) interacts with ATP.

Belongs to the class-I aminoacyl-tRNA synthetase family. Glutamate--tRNA ligase type 1 subfamily. Monomer.

It localises to the cytoplasm. The catalysed reaction is tRNA(Glu) + L-glutamate + ATP = L-glutamyl-tRNA(Glu) + AMP + diphosphate. Its function is as follows. Catalyzes the attachment of glutamate to tRNA(Glu) in a two-step reaction: glutamate is first activated by ATP to form Glu-AMP and then transferred to the acceptor end of tRNA(Glu). The chain is Glutamate--tRNA ligase 2 from Sphingopyxis alaskensis (strain DSM 13593 / LMG 18877 / RB2256) (Sphingomonas alaskensis).